Reading from the N-terminus, the 217-residue chain is U exon protein (217 aa).

2 disordered regions span residues 79–113 (ISGEGNGQSGRGAARNHPRARTRCGATSPNHGGRV) and 171–217 (KEAP…WQRR). A compositionally biased stretch (basic residues) spans 188 to 197 (RGQRGRKRRC). Residues 202–217 (GGFQQPTGANQAWQRR) show a composition bias toward polar residues.

This sequence belongs to the adenoviridae U exon protein family.

Its subcellular location is the host nucleus. The protein resides in the host nucleoplasm. It localises to the host nucleolus. Its function is as follows. Might play a role in viral replication since it is associated with viral replication centers. Seems to have an effect on DBP localization. The sequence is that of U exon protein from Human adenovirus C serotype 5 (HAdV-5).